Consider the following 2677-residue polypeptide: Probable helicase senataxin (2677 aa).

Lysine 339 is covalently cross-linked (Glycyl lysine isopeptide (Lys-Gly) (interchain with G-Cter in SUMO1)). Phosphoserine is present on residues serine 615, serine 642, and serine 878. Residue lysine 894 forms a Glycyl lysine isopeptide (Lys-Gly) (interchain with G-Cter in SUMO2) linkage. 5 positions are modified to phosphoserine: serine 911, serine 947, serine 956, serine 1017, and serine 1019. Residues lysine 1056 and lysine 1063 each participate in a glycyl lysine isopeptide (Lys-Gly) (interchain with G-Cter in SUMO2) cross-link. Disordered stretches follow at residues 1158–1219 and 1237–1258; these read KKPK…TTVS and PVSK…RSSN. Over residues 1176–1187 the composition is skewed to polar residues; the sequence is PSSSVRNEGQSD. Residues 1188–1205 are compositionally biased toward basic and acidic residues; that stretch reads TNKRDLVGNDFKSIDRRT. The span at 1206–1219 shows a compositional bias: polar residues; sequence STPNSRIQRATTVS. The residue at position 1330 (serine 1330) is a Phosphoserine. Residues lysine 1340 and lysine 1341 each participate in a glycyl lysine isopeptide (Lys-Gly) (interchain with G-Cter in SUMO2) cross-link. The tract at residues 1351-1385 is disordered; sequence QRQIRPKSQKNRRRLSDCESTDVKRAGSHTAQNSD. Residues 1354 to 1363 are compositionally biased toward basic residues; the sequence is IRPKSQKNRR. Basic and acidic residues predominate over residues 1364–1375; that stretch reads RLSDCESTDVKR. A Phosphoserine modification is found at serine 1366. Lysine 1415 participates in a covalent cross-link: Glycyl lysine isopeptide (Lys-Gly) (interchain with G-Cter in SUMO2). A Phosphoserine modification is found at serine 1489. The tract at residues 1579-1604 is disordered; that stretch reads FRKPGLPPPASKPLRPTTKIFSSKST. 3 positions are modified to phosphoserine: serine 1621, serine 1623, and serine 1663. ATP is bound at residue 1963-1970; that stretch reads GPPGTGKS. The Bipartite nuclear localization signal motif lies at 2070-2087; that stretch reads KKELPSHVQAMHKRKEFL. Residues 2105 to 2136 are a coiled coil; sequence REIQRQELDENISKVSKERQELASKIKEVQGR. A Phosphothreonine modification is found at threonine 2474. Disordered regions lie at residues 2474 to 2496, 2556 to 2577, and 2597 to 2677; these read THPP…SKLD, WDPQ…EPGF, and LSSH…RKLL. The span at 2560-2573 shows a compositional bias: pro residues; that stretch reads PSSPQHPGATPPTG. Over residues 2628-2671 the composition is skewed to basic and acidic residues; the sequence is ELCHRREARAFSEGEQEKCGSETHHTRRNSRWDKRTLEQEDSSS. A necessary for nuclear localization region spans residues 2661-2677; sequence KRTLEQEDSSSKKRKLL.

Belongs to the DNA2/NAM7 helicase family. Homodimer. Interacts with PER2; the interaction inhibits termination of circadian target genes. Interacts with CHD4, POLR2A, PRKDC and TRIM28. Interacts with UBE2I. Interacts (via N-terminus domain) with EXOSC9 (via C-terminus region); the interaction enhances SETX sumoylation. Interacts with NCL (via N-terminus domain). Interacts with PABPN1, PABPC1 and SF3B1. Interacts with SMN1/SMN2 and POLR2A; SMN1/SMN2 recruits SETX to POLR2A. Ubiquitinated. Post-translationally, sumoylated preferentially with SUMO2 or SUMO3. In terms of tissue distribution, highly expressed in skeletal muscle. Expressed in heart, fibroblast, placenta and liver. Weakly expressed in brain and lung. Expressed in the cortex of the kidney (highly expressed in tubular epithelial cells but low expression in the glomerulus).

It is found in the nucleus. It localises to the nucleoplasm. Its subcellular location is the nucleolus. The protein localises to the cytoplasm. The protein resides in the chromosome. It is found in the telomere. It localises to the cell projection. Its subcellular location is the axon. The protein localises to the growth cone. In terms of biological role, probable RNA/DNA helicase involved in diverse aspects of RNA metabolism and genomic integrity. Plays a role in transcription regulation by its ability to modulate RNA Polymerase II (Pol II) binding to chromatin and through its interaction with proteins involved in transcription. Contributes to the mRNA splicing efficiency and splice site selection. Required for the resolution of R-loop RNA-DNA hybrid formation at G-rich pause sites located downstream of the poly(A) site, allowing XRN2 recruitment and XRN2-mediated degradation of the downstream cleaved RNA and hence efficient RNA polymerase II (RNAp II) transcription termination. Required for the 3' transcriptional termination of PER1 and CRY2, thus playing an important role in the circadian rhythm regulation. Involved in DNA double-strand breaks damage response generated by oxidative stress. In association with RRP45, targets the RNA exosome complex to sites of transcription-induced DNA damage. Plays a role in the development and maturation of germ cells: essential for male meiosis, acting at the interface of transcription and meiotic recombination, and in the process of gene silencing during meiotic sex chromosome inactivation (MSCI). May be involved in telomeric stability through the regulation of telomere repeat-containing RNA (TERRA) transcription. Plays a role in neurite outgrowth in hippocampal cells through FGF8-activated signaling pathways. Inhibits retinoic acid-induced apoptosis. The chain is Probable helicase senataxin from Homo sapiens (Human).